The following is a 296-amino-acid chain: Formamidopyrimidine-DNA glycosylase (296 aa).

The Schiff-base intermediate with DNA role is filled by Pro-2. Glu-3 acts as the Proton donor in catalysis. Lys-58 functions as the Proton donor; for beta-elimination activity in the catalytic mechanism. DNA is bound by residues His-104, Arg-126, and Lys-169. The FPG-type zinc finger occupies 260-296 (SVYDREGQACGTPGCGGTVARIVQAGRSTFYCAACQK). Arg-286 serves as the catalytic Proton donor; for delta-elimination activity.

Belongs to the FPG family. As to quaternary structure, monomer. Zn(2+) is required as a cofactor.

It catalyses the reaction Hydrolysis of DNA containing ring-opened 7-methylguanine residues, releasing 2,6-diamino-4-hydroxy-5-(N-methyl)formamidopyrimidine.. The catalysed reaction is 2'-deoxyribonucleotide-(2'-deoxyribose 5'-phosphate)-2'-deoxyribonucleotide-DNA = a 3'-end 2'-deoxyribonucleotide-(2,3-dehydro-2,3-deoxyribose 5'-phosphate)-DNA + a 5'-end 5'-phospho-2'-deoxyribonucleoside-DNA + H(+). In terms of biological role, involved in base excision repair of DNA damaged by oxidation or by mutagenic agents. Acts as a DNA glycosylase that recognizes and removes damaged bases. Has a preference for oxidized purines, such as 7,8-dihydro-8-oxoguanine (8-oxoG). Has AP (apurinic/apyrimidinic) lyase activity and introduces nicks in the DNA strand. Cleaves the DNA backbone by beta-delta elimination to generate a single-strand break at the site of the removed base with both 3'- and 5'-phosphates. This is Formamidopyrimidine-DNA glycosylase from Rhizobium etli (strain CIAT 652).